The sequence spans 168 residues: Crossover junction endodeoxyribonuclease RuvC (168 aa).

Catalysis depends on residues Asp8, Glu68, and Asp140. Mg(2+) is bound by residues Asp8, Glu68, and Asp140.

It belongs to the RuvC family. In terms of assembly, homodimer which binds Holliday junction (HJ) DNA. The HJ becomes 2-fold symmetrical on binding to RuvC with unstacked arms; it has a different conformation from HJ DNA in complex with RuvA. In the full resolvosome a probable DNA-RuvA(4)-RuvB(12)-RuvC(2) complex forms which resolves the HJ. Mg(2+) serves as cofactor.

The protein localises to the cytoplasm. It carries out the reaction Endonucleolytic cleavage at a junction such as a reciprocal single-stranded crossover between two homologous DNA duplexes (Holliday junction).. In terms of biological role, the RuvA-RuvB-RuvC complex processes Holliday junction (HJ) DNA during genetic recombination and DNA repair. Endonuclease that resolves HJ intermediates. Cleaves cruciform DNA by making single-stranded nicks across the HJ at symmetrical positions within the homologous arms, yielding a 5'-phosphate and a 3'-hydroxyl group; requires a central core of homology in the junction. The consensus cleavage sequence is 5'-(A/T)TT(C/G)-3'. Cleavage occurs on the 3'-side of the TT dinucleotide at the point of strand exchange. HJ branch migration catalyzed by RuvA-RuvB allows RuvC to scan DNA until it finds its consensus sequence, where it cleaves and resolves the cruciform DNA. This chain is Crossover junction endodeoxyribonuclease RuvC, found in Gluconacetobacter diazotrophicus (strain ATCC 49037 / DSM 5601 / CCUG 37298 / CIP 103539 / LMG 7603 / PAl5).